Consider the following 69-residue polypeptide: Conotoxin Fr3.1 (69 aa).

The signal sequence occupies residues 1-20 (MLKTGVLLLIFLVLFPLATL). Positions 21-51 (QDADQPVERNVENKQDLNLDKRRGMKLLAQR) are excised as a propeptide. Residue Q52 is modified to Pyrrolidone carboxylic acid. Position 54 is a 4-carboxyglutamate (E54). P58 carries the 4-hydroxyproline modification.

Belongs to the conotoxin M superfamily. In terms of tissue distribution, expressed by the venom duct.

The protein localises to the secreted. Functionally, probable toxin. In Conus frigidus (Frigid cone), this protein is Conotoxin Fr3.1.